The sequence spans 739 residues: Elongation factor 2 (739 aa).

Positions 19-261 (RNIRNIGIIA…MVALHVPDPI (243 aa)) constitute a tr-type G domain. GTP-binding positions include 28–35 (AHVDHGKT), 94–98 (DTPGH), and 148–151 (NKID). H603 is subject to Diphthamide.

This sequence belongs to the TRAFAC class translation factor GTPase superfamily. Classic translation factor GTPase family. EF-G/EF-2 subfamily.

It is found in the cytoplasm. Its function is as follows. Catalyzes the GTP-dependent ribosomal translocation step during translation elongation. During this step, the ribosome changes from the pre-translocational (PRE) to the post-translocational (POST) state as the newly formed A-site-bound peptidyl-tRNA and P-site-bound deacylated tRNA move to the P and E sites, respectively. Catalyzes the coordinated movement of the two tRNA molecules, the mRNA and conformational changes in the ribosome. The protein is Elongation factor 2 of Korarchaeum cryptofilum (strain OPF8).